We begin with the raw amino-acid sequence, 23 residues long: Unknown protein NF005 from 2D-PAGE (23 aa).

Residues 1–23 are disordered; that stretch reads AGKARKQLSKNEDTKLKEQYIXD. Residues 9-23 show a composition bias toward basic and acidic residues; the sequence is SKNEDTKLKEQYIXD.

The chain is Unknown protein NF005 from 2D-PAGE from Naegleria fowleri (Brain eating amoeba).